A 948-amino-acid chain; its full sequence is Bifunctional glutamine synthetase adenylyltransferase/adenylyl-removing enzyme (948 aa).

The tract at residues 1–447 (MLTPDNKLMS…EFQQVVGAES (447 aa)) is adenylyl removase. An adenylyl transferase region spans residues 453 to 948 (EQGLQVLWQD…NCWNHLLEDD (496 aa)).

Belongs to the GlnE family. Mg(2+) is required as a cofactor.

It catalyses the reaction [glutamine synthetase]-O(4)-(5'-adenylyl)-L-tyrosine + phosphate = [glutamine synthetase]-L-tyrosine + ADP. The catalysed reaction is [glutamine synthetase]-L-tyrosine + ATP = [glutamine synthetase]-O(4)-(5'-adenylyl)-L-tyrosine + diphosphate. Functionally, involved in the regulation of glutamine synthetase GlnA, a key enzyme in the process to assimilate ammonia. When cellular nitrogen levels are high, the C-terminal adenylyl transferase (AT) inactivates GlnA by covalent transfer of an adenylyl group from ATP to specific tyrosine residue of GlnA, thus reducing its activity. Conversely, when nitrogen levels are low, the N-terminal adenylyl removase (AR) activates GlnA by removing the adenylyl group by phosphorolysis, increasing its activity. The regulatory region of GlnE binds the signal transduction protein PII (GlnB) which indicates the nitrogen status of the cell. The protein is Bifunctional glutamine synthetase adenylyltransferase/adenylyl-removing enzyme of Idiomarina loihiensis (strain ATCC BAA-735 / DSM 15497 / L2-TR).